The following is a 347-amino-acid chain: Fatty acid elongase 2 (347 aa).

Residues 1-62 are Lumenal-facing; sequence MNSLVTQYAA…PSEFQFIAGE (62 aa). Asn-32 is a glycosylation site (N-linked (GlcNAc...) asparagine). Residues 63–83 traverse the membrane as a helical segment; it reads LPLSTLPPVLYAITAYYVIIF. The Cytoplasmic portion of the chain corresponds to 84–96; sequence GGRFLLSKSKPFK. Residues 97-119 form a helical membrane-spanning segment; sequence LNGLFQLHNLVLTSLSLTLLLLM. Topologically, residues 120-122 are lumenal; that stretch reads VEQ. A helical membrane pass occupies residues 123-142; sequence LVPIIVQHGLYFAICNIGAW. Residues 143-146 lie on the Cytoplasmic side of the membrane; sequence TQPL. Residues 147–169 form a helical membrane-spanning segment; it reads VTLYYMNYIVKFIEFIDTFFLVL. At 170 to 200 the chain is on the lumenal side; the sequence is KHKKLTFLHTYHHGATALLCYTQLMGTTSIS. A HxxHH motif motif is present at residues 178–182; that stretch reads HTYHH. The helical transmembrane segment at 201–221 threads the bilayer; it reads WVPISLNLGVHVVMYWYYFLA. Residues 222–231 are Cytoplasmic-facing; the sequence is ARGIRVWWKE. A helical membrane pass occupies residues 232-254; it reads WVTRFQIIQFVLDIGFIYFAVYQ. At 255-275 the chain is on the lumenal side; that stretch reads KAVHLYFPILPHCGDCVGSTT. Residues 276–296 traverse the membrane as a helical segment; that stretch reads ATFAGCAIISSYLVLFISFYI. The Cytoplasmic segment spans residues 297-347; that stretch reads NVYKRKGTKTSRVVKRAHGGVAAKVNEYVNVDLKNVPTPSPSPKPQHRRKR. Thr-334 is modified (phosphothreonine). 2 positions are modified to phosphoserine: Ser-336 and Ser-338. Positions 344–347 match the Di-lysine-like motif motif; that stretch reads RRKR.

This sequence belongs to the ELO family.

It localises to the endoplasmic reticulum membrane. The catalysed reaction is a very-long-chain acyl-CoA + malonyl-CoA + H(+) = a very-long-chain 3-oxoacyl-CoA + CO2 + CoA. It carries out the reaction octadecanoyl-CoA + malonyl-CoA + H(+) = 3-oxoeicosanoyl-CoA + CO2 + CoA. It catalyses the reaction hexadecanoyl-CoA + malonyl-CoA + H(+) = 3-oxooctadecanoyl-CoA + CO2 + CoA. The enzyme catalyses eicosanoyl-CoA + malonyl-CoA + H(+) = 3-oxodocosanoyl-CoA + CO2 + CoA. The catalysed reaction is docosanoyl-CoA + malonyl-CoA + H(+) = 3-oxotetracosanoyl-CoA + CO2 + CoA. In terms of biological role, component of a microsomal membrane-bound long-chain fatty acid elongation system, which produces the 20-26-carbon very long-chain fatty acids (VLCFA) from long-chain fatty acid precursors and is involved ceramide and inositol sphingolipid biosynthesis. Component of elongase II, which elongates 16-18 carbon fatty acyl-CoAs such as palmitoyl-CoA and stearoyl-CoA to 20-22-carbon fatty acids by incorporation of malonyl-CoA. Involved in the synthesis of 1,3-beta-glucan. The enzymes active site faces the cytosol, whereas VLCFA length is determined by a lysine near the luminal end of transmembrane helix 6. Plays an important role in lipotoxic cell death induced by oleic acid through maintaining a balanced fatty acid composition in thr plasma membrane. The sequence is that of Fatty acid elongase 2 from Saccharomyces cerevisiae (strain ATCC 204508 / S288c) (Baker's yeast).